Here is a 395-residue protein sequence, read N- to C-terminus: Cytoplasmic 60S subunit biogenesis factor REI1 homolog 2 (395 aa).

4 C2H2-type zinc fingers span residues Leu4–His28, Tyr68–His92, Ala171–His194, and Phe222–His249.

Belongs to the REI1 family. As to quaternary structure, can form homodimer. Interacts with RLP24, RLP24A, RPL24B, EBP1 and JJJ1.

Its subcellular location is the cytoplasm. Pre-60S-associated factor involved in the cytoplasmic maturation of the 60S subunit. Involved in the dissociation and recycling of other late pre-60S factors before newly synthesized large ribosomal subunits enter translation. Can complement the growth defect of a yeast mutant lacking REI1. Required for leaf growth under cold temperature conditions. In Arabidopsis thaliana (Mouse-ear cress), this protein is Cytoplasmic 60S subunit biogenesis factor REI1 homolog 2.